The primary structure comprises 119 residues: Large ribosomal subunit protein bL20 (119 aa).

The protein belongs to the bacterial ribosomal protein bL20 family.

Functionally, binds directly to 23S ribosomal RNA and is necessary for the in vitro assembly process of the 50S ribosomal subunit. It is not involved in the protein synthesizing functions of that subunit. This is Large ribosomal subunit protein bL20 from Bordetella bronchiseptica (strain ATCC BAA-588 / NCTC 13252 / RB50) (Alcaligenes bronchisepticus).